Reading from the N-terminus, the 318-residue chain is MALDDIHTPVLLERCLELLAPALQGEGAVLVDATLGMAGHSEAFLDALPGLRLVGLDRDPDALAIAGERLARFGDRVHLVHTVYDGIGRALDGLGIGEVQGVFFDLGVSSLQLDRVERGFSYSQDAPLDMRMDGTAGLTAAQVVAEYDELELRRIFYDYGEEKLAPRYASRIVQAREVEPITTSARLVEIIQQATPAAVQRAGHPAKRVFQALRIEVNQELSVLARAMPAAIDRLAVGGRVVVESYQSLEDRIVKRELRVRSTSTAPVGLPVELPEHRPELKLLVRGAELADQHEIAQNPRAASVRLRAAERARRRHA.

Residues Ala-38–His-40, Asp-57, Leu-91, Asp-105, and Gln-112 each bind S-adenosyl-L-methionine.

It belongs to the methyltransferase superfamily. RsmH family.

It localises to the cytoplasm. The catalysed reaction is cytidine(1402) in 16S rRNA + S-adenosyl-L-methionine = N(4)-methylcytidine(1402) in 16S rRNA + S-adenosyl-L-homocysteine + H(+). Its function is as follows. Specifically methylates the N4 position of cytidine in position 1402 (C1402) of 16S rRNA. This is Ribosomal RNA small subunit methyltransferase H from Clavibacter sepedonicus (Clavibacter michiganensis subsp. sepedonicus).